Here is a 456-residue protein sequence, read N- to C-terminus: Exodeoxyribonuclease 7 large subunit (456 aa).

It belongs to the XseA family. In terms of assembly, heterooligomer composed of large and small subunits.

It localises to the cytoplasm. It carries out the reaction Exonucleolytic cleavage in either 5'- to 3'- or 3'- to 5'-direction to yield nucleoside 5'-phosphates.. Its function is as follows. Bidirectionally degrades single-stranded DNA into large acid-insoluble oligonucleotides, which are then degraded further into small acid-soluble oligonucleotides. This Escherichia coli O157:H7 protein is Exodeoxyribonuclease 7 large subunit.